The chain runs to 256 residues: Thiazole synthase (256 aa).

K95 serves as the catalytic Schiff-base intermediate with DXP. 1-deoxy-D-xylulose 5-phosphate contacts are provided by residues G156, 182 to 183, and 204 to 205; these read AG and NT.

This sequence belongs to the ThiG family. Homotetramer. Forms heterodimers with either ThiH or ThiS.

The protein localises to the cytoplasm. It catalyses the reaction [ThiS sulfur-carrier protein]-C-terminal-Gly-aminoethanethioate + 2-iminoacetate + 1-deoxy-D-xylulose 5-phosphate = [ThiS sulfur-carrier protein]-C-terminal Gly-Gly + 2-[(2R,5Z)-2-carboxy-4-methylthiazol-5(2H)-ylidene]ethyl phosphate + 2 H2O + H(+). The protein operates within cofactor biosynthesis; thiamine diphosphate biosynthesis. Its function is as follows. Catalyzes the rearrangement of 1-deoxy-D-xylulose 5-phosphate (DXP) to produce the thiazole phosphate moiety of thiamine. Sulfur is provided by the thiocarboxylate moiety of the carrier protein ThiS. In vitro, sulfur can be provided by H(2)S. The polypeptide is Thiazole synthase (Escherichia coli O127:H6 (strain E2348/69 / EPEC)).